The sequence spans 155 residues: Ribosomal RNA large subunit methyltransferase H 1 (155 aa).

Residues Leu76, Gly108, and 127 to 132 (FSKMTF) each bind S-adenosyl-L-methionine.

Belongs to the RNA methyltransferase RlmH family. Homodimer.

The protein localises to the cytoplasm. The enzyme catalyses pseudouridine(1915) in 23S rRNA + S-adenosyl-L-methionine = N(3)-methylpseudouridine(1915) in 23S rRNA + S-adenosyl-L-homocysteine + H(+). Specifically methylates the pseudouridine at position 1915 (m3Psi1915) in 23S rRNA. In Thermoanaerobacter pseudethanolicus (strain ATCC 33223 / 39E) (Clostridium thermohydrosulfuricum), this protein is Ribosomal RNA large subunit methyltransferase H 1.